We begin with the raw amino-acid sequence, 605 residues long: MSQSATRNFCIIAHIDHGKSTLADRLIEMTGTLRHDEMCEQVMDSMELERERGITIKAKAIRLRYLSKDSHEYRLNLIDTPGHVDFSYEVSRTIAACEGAILVIDATQGIQAQTLANVYLAIEYNLEIIPVINKIDLPGADIPRVMGEIKSVLGYDEDAVIQISAKLGLGVPELLEAIVARVPAPKGDGKLPLRALIFDSHYDPYKGVVAYLRVADGNINKGDDLRLMGQGTEFKVLEAGYFAPAQVAALRLDVGDVGYVATGLKSVGECRVGDTVTLQHGGAIQPLIGYHPAKAMVFAGIYPTQTDDYHELREAMEKLSLNDASLSYEPESSPLLGHGFRCGFLGLLHLDIIVERLEREFNLSLVVTSPGVSLTVTRTSGEVLTVVNPNEMPLPHEIASIEEPWVSVVIITPSKYIGTVMDLVRENYGVYKNTEYLGQLAMSELGQRVQLHYDMPLRSILTTFHDQLKSRTQGYASLDYEFVGYRIANLSKIDVLVNDVAVDAFSRIIPPDKAHEIGEALVKKLKEMIPRQLYQVTLQAAIGSKIVARADISAKRKDVIAKCYGGDITRKRKLLDKQKEGKKKMRQIGKVEVPKEAFLSVLKLQ.

Positions 4 to 186 (SATRNFCIIA…AIVARVPAPK (183 aa)) constitute a tr-type G domain. GTP contacts are provided by residues 16–21 (DHGKST) and 133–136 (NKID).

It belongs to the TRAFAC class translation factor GTPase superfamily. Classic translation factor GTPase family. LepA subfamily.

Its subcellular location is the cell membrane. The enzyme catalyses GTP + H2O = GDP + phosphate + H(+). In terms of biological role, required for accurate and efficient protein synthesis under certain stress conditions. May act as a fidelity factor of the translation reaction, by catalyzing a one-codon backward translocation of tRNAs on improperly translocated ribosomes. Back-translocation proceeds from a post-translocation (POST) complex to a pre-translocation (PRE) complex, thus giving elongation factor G a second chance to translocate the tRNAs correctly. Binds to ribosomes in a GTP-dependent manner. The polypeptide is Elongation factor 4 (Dehalococcoides mccartyi (strain ATCC BAA-2266 / KCTC 15142 / 195) (Dehalococcoides ethenogenes (strain 195))).